We begin with the raw amino-acid sequence, 379 residues long: Mating-type protein MAT-1 (379 aa).

Residues 60–117 (KARKALNAFVGFRCYYITIPMFKPWPMKKLSNLIGLLWEADPNKSLWSLMAKAWSTIR) constitute a DNA-binding region (alpha box).

It belongs to the MATALPHA1 family.

The protein localises to the nucleus. Functionally, mating type proteins are sequence specific DNA-binding proteins that act as master switches in fungal differentiation by controlling gene expression in a cell type-specific fashion. Transcriptional activator that induces the transcription of alpha-specific genes. This chain is Mating-type protein MAT-1 (MAT1), found in Cochliobolus carbonum (strain 26-R-13) (Maize leaf spot fungus).